The primary structure comprises 55 residues: Locustin (55 aa).

4 disulfide bridges follow: cysteine 5–cysteine 40, cysteine 7–cysteine 36, cysteine 10–cysteine 32, and cysteine 17–cysteine 54.

As to quaternary structure, monomer. In terms of tissue distribution, stored in hemocyte granules and secreted into the hemolymph.

Its subcellular location is the secreted. Has antibacterial activity against Gram-positive bacterium M.luteus. In Locusta migratoria (Migratory locust), this protein is Locustin.